A 156-amino-acid polypeptide reads, in one-letter code: Small ribosomal subunit protein uS7c (156 aa).

It belongs to the universal ribosomal protein uS7 family. In terms of assembly, part of the 30S ribosomal subunit.

It is found in the plastid. It localises to the chloroplast. In terms of biological role, one of the primary rRNA binding proteins, it binds directly to 16S rRNA where it nucleates assembly of the head domain of the 30S subunit. The protein is Small ribosomal subunit protein uS7c (rps7) of Tupiella akineta (Green alga).